A 115-amino-acid chain; its full sequence is Large ribosomal subunit protein bL19 (115 aa).

The protein belongs to the bacterial ribosomal protein bL19 family.

In terms of biological role, this protein is located at the 30S-50S ribosomal subunit interface and may play a role in the structure and function of the aminoacyl-tRNA binding site. The polypeptide is Large ribosomal subunit protein bL19 (Pectobacterium atrosepticum (strain SCRI 1043 / ATCC BAA-672) (Erwinia carotovora subsp. atroseptica)).